The following is a 100-amino-acid chain: Putative ESAT-6-like protein Y (100 aa).

It belongs to the WXG100 family.

The polypeptide is Putative ESAT-6-like protein Y (Mycobacterium leprae (strain TN)).